A 634-amino-acid chain; its full sequence is Chaperone protein dnaK2 (634 aa).

T197 bears the Phosphothreonine; by autocatalysis mark. Over residues 601–620 the composition is skewed to low complexity; it reads SAEASANAQAGPSSSSSSSS. The disordered stretch occupies residues 601 to 634; it reads SAEASANAQAGPSSSSSSSSGDDDVIDAEFSESK. The segment covering 621–634 has biased composition (acidic residues); it reads GDDDVIDAEFSESK.

It belongs to the heat shock protein 70 family.

Its function is as follows. Acts as a chaperone. This Synechococcus elongatus (strain ATCC 33912 / PCC 7942 / FACHB-805) (Anacystis nidulans R2) protein is Chaperone protein dnaK2 (dnaK2).